We begin with the raw amino-acid sequence, 294 residues long: tRNA dimethylallyltransferase (294 aa).

10 to 17 is a binding site for ATP; it reads GPTAVGKT. 12-17 serves as a coordination point for substrate; it reads TAVGKT. Positions 35-38 are interaction with substrate tRNA; it reads DSQQ.

It belongs to the IPP transferase family. In terms of assembly, monomer. Mg(2+) is required as a cofactor.

It carries out the reaction adenosine(37) in tRNA + dimethylallyl diphosphate = N(6)-dimethylallyladenosine(37) in tRNA + diphosphate. Its function is as follows. Catalyzes the transfer of a dimethylallyl group onto the adenine at position 37 in tRNAs that read codons beginning with uridine, leading to the formation of N6-(dimethylallyl)adenosine (i(6)A). The polypeptide is tRNA dimethylallyltransferase (Streptococcus pneumoniae (strain Hungary19A-6)).